The following is a 537-amino-acid chain: CTP synthase (537 aa).

The amidoligase domain stretch occupies residues 1–268 (MSFKCIFLTG…STFITEKLGL (268 aa)). Serine 14 contacts CTP. Serine 14 is a binding site for UTP. 15–20 (SLGKGL) contacts ATP. Tyrosine 55 is an L-glutamine binding site. ATP is bound at residue aspartate 72. Mg(2+) is bound by residues aspartate 72 and glutamate 142. CTP-binding positions include 149–151 (DIE), 188–193 (KTKPTQ), and lysine 224. Residues 188 to 193 (KTKPTQ) and lysine 224 each bind UTP. Residues 294 to 533 (RLGLVGKYVQ…IEAALLHSRN (240 aa)) form the Glutamine amidotransferase type-1 domain. Residue glycine 353 coordinates L-glutamine. The active-site Nucleophile; for glutamine hydrolysis is cysteine 380. Residues 381-384 (LGMQ), glutamate 404, and arginine 461 each bind L-glutamine. Catalysis depends on residues histidine 506 and glutamate 508.

It belongs to the CTP synthase family. As to quaternary structure, homotetramer.

It catalyses the reaction UTP + L-glutamine + ATP + H2O = CTP + L-glutamate + ADP + phosphate + 2 H(+). The enzyme catalyses L-glutamine + H2O = L-glutamate + NH4(+). It carries out the reaction UTP + NH4(+) + ATP = CTP + ADP + phosphate + 2 H(+). It participates in pyrimidine metabolism; CTP biosynthesis via de novo pathway; CTP from UDP: step 2/2. Allosterically activated by GTP, when glutamine is the substrate; GTP has no effect on the reaction when ammonia is the substrate. The allosteric effector GTP functions by stabilizing the protein conformation that binds the tetrahedral intermediate(s) formed during glutamine hydrolysis. Inhibited by the product CTP, via allosteric rather than competitive inhibition. Its function is as follows. Catalyzes the ATP-dependent amination of UTP to CTP with either L-glutamine or ammonia as the source of nitrogen. Regulates intracellular CTP levels through interactions with the four ribonucleotide triphosphates. The sequence is that of CTP synthase from Chlamydia abortus (strain DSM 27085 / S26/3) (Chlamydophila abortus).